The primary structure comprises 446 residues: Glutamine synthetase (446 aa).

The region spanning 15 to 102 (RDIRFVRLWF…MFCDITMPDG (88 aa)) is the GS beta-grasp domain. The region spanning 109-446 (PRHVLRRQLT…PYELRTYLSL (338 aa)) is the GS catalytic domain. Residues Glu-132 and Glu-134 each coordinate Mg(2+). Position 184 (Glu-184) interacts with ATP. Positions 189 and 196 each coordinate Mg(2+). Position 241 (Gly-241) interacts with L-glutamate. Residue His-245 coordinates Mg(2+). ATP-binding positions include 247 to 249 (HMS) and Ser-249. 3 residues coordinate L-glutamate: Arg-298, Glu-304, and Arg-316. Arg-316 and Arg-321 together coordinate ATP. Glu-336 serves as a coordination point for Mg(2+). An L-glutamate-binding site is contributed by Arg-338.

The protein belongs to the glutamine synthetase family. Oligomer of 12 subunits arranged in the form of two hexagons. In its feedback-inhibited form, interacts with TnrA in order to block its DNA-binding activity. Requires Mg(2+) as cofactor.

The protein resides in the cytoplasm. The catalysed reaction is L-glutamate + NH4(+) + ATP = L-glutamine + ADP + phosphate + H(+). Inhibited by glutamine. In terms of biological role, glutamine synthetase (GS) is an unusual multitasking protein that functions as an enzyme, a transcription coregulator, and a chaperone in ammonium assimilation and in the regulation of genes involved in nitrogen metabolism. It catalyzes the ATP-dependent biosynthesis of glutamine from glutamate and ammonia. Feedback-inhibited GlnA also interacts with and regulates the activity of the transcriptional regulator TnrA. During nitrogen limitation, TnrA is in its DNA-binding active state and turns on the transcription of genes required for nitrogen assimilation. Under conditions of nitrogen excess, feedback-inhibited GlnA forms a stable complex with TnrA, which inhibits its DNA-binding activity. In contrast, feedback-inhibited GlnA acts as a chaperone to stabilize the DNA-binding activity of GlnR, which represses the transcription of nitrogen assimilation genes. The sequence is that of Glutamine synthetase from Mycobacterium bovis (strain ATCC BAA-935 / AF2122/97).